The chain runs to 22 residues: uncharacterized protein (22 aa).

It belongs to the asfivirus C84L family.

This is an uncharacterized protein from Ornithodoros (relapsing fever ticks).